Reading from the N-terminus, the 132-residue chain is S-protein homolog 8 (132 aa).

The first 20 residues, 1-20, serve as a signal peptide directing secretion; it reads MHSLSWFLLVIGLSVGLSSG.

The protein belongs to the plant self-incompatibility (S1) protein family. As to expression, mostly expressed in seedlings, stems, leaves and floral tissues, and, to a lower extent, in roots.

It is found in the secreted. In Arabidopsis thaliana (Mouse-ear cress), this protein is S-protein homolog 8.